We begin with the raw amino-acid sequence, 361 residues long: Mycothiol acetyltransferase (361 aa).

N-acetyltransferase domains follow at residues 25-173 and 195-361; these read PRVR…LPGS and VTVL…AWKF. Glu59 lines the 1D-myo-inositol 2-(L-cysteinylamino)-2-deoxy-alpha-D-glucopyranoside pocket. Residue 98 to 100 coordinates acetyl-CoA; it reads LAV. Residues Glu229, Lys280, and Glu295 each contribute to the 1D-myo-inositol 2-(L-cysteinylamino)-2-deoxy-alpha-D-glucopyranoside site. Acetyl-CoA is bound by residues 299 to 301 and 306 to 312; these read IGL and QGRGLGR. A 1D-myo-inositol 2-(L-cysteinylamino)-2-deoxy-alpha-D-glucopyranoside-binding site is contributed by Tyr333. Acetyl-CoA is bound at residue 338–343; sequence NAPAVH.

The protein belongs to the acetyltransferase family. MshD subfamily. In terms of assembly, monomer.

It catalyses the reaction 1D-myo-inositol 2-(L-cysteinylamino)-2-deoxy-alpha-D-glucopyranoside + acetyl-CoA = mycothiol + CoA + H(+). In terms of biological role, catalyzes the transfer of acetyl from acetyl-CoA to desacetylmycothiol (Cys-GlcN-Ins) to form mycothiol. The polypeptide is Mycothiol acetyltransferase (Corynebacterium kroppenstedtii (strain DSM 44385 / JCM 11950 / CIP 105744 / CCUG 35717)).